We begin with the raw amino-acid sequence, 359 residues long: Acyl-CoA desaturase (359 aa).

The Cytoplasmic segment spans residues 1–72; it reads MPAHLLQEEI…EGPKPKLEYV (72 aa). Residues 73–93 traverse the membrane as a helical segment; that stretch reads WRNIILMGLLHLGALYGITLI. Residue asparagine 75 participates in substrate binding. At 94-97 the chain is on the lumenal side; it reads PTCK. The helical transmembrane segment at 98–118 threads the bilayer; the sequence is IYTFLWVLFYYVISALGITAG. Residues 119–217 lie on the Cytoplasmic side of the membrane; sequence VHRLWSHRTY…EKLVMFQRRY (99 aa). Fe cation-binding residues include histidine 120 and histidine 125. The Histidine box-1 signature appears at 120 to 125; that stretch reads HRLWSH. Residues asparagine 148, arginine 155, and aspartate 156 each contribute to the substrate site. Fe cation-binding residues include histidine 157, histidine 160, and histidine 161. The short motif at 157–161 is the Histidine box-2 element; it reads HRAHH. 2 residues coordinate substrate: arginine 188 and lysine 189. At serine 203 the chain carries Phosphoserine. The chain crosses the membrane as a helical span at residues 218–237; it reads YKPGVLLLCFILPTLVPWYL. Topologically, residues 238–241 are lumenal; that stretch reads WGES. Residues 242–263 form a helical membrane-spanning segment; sequence FQNSLFFATFLRYAVVLNATWL. Tryptophan 262 contacts substrate. Residues 264 to 359 lie on the Cytoplasmic side of the membrane; the sequence is VNSAAHMYGY…RTGEESYKSG (96 aa). Residues histidine 269, histidine 298, histidine 301, and histidine 302 each coordinate Fe cation. The Histidine box-3 signature appears at 298–302; sequence HNYHH.

Belongs to the fatty acid desaturase type 1 family. Fe(2+) is required as a cofactor.

The protein localises to the endoplasmic reticulum membrane. The enzyme catalyses octadecanoyl-CoA + 2 Fe(II)-[cytochrome b5] + O2 + 2 H(+) = (9Z)-octadecenoyl-CoA + 2 Fe(III)-[cytochrome b5] + 2 H2O. In terms of biological role, stearoyl-CoA desaturase that utilizes O(2) and electrons from reduced cytochrome b5 to introduce the first double bond into saturated fatty acyl-CoA substrates. Catalyzes the insertion of a cis double bond at the delta-9 position into fatty acyl-CoA substrates including palmitoyl-CoA and stearoyl-CoA. Gives rise to a mixture of 16:1 and 18:1 unsaturated fatty acids. Plays an important role in lipid biosynthesis. Plays an important role in regulating the expression of genes that are involved in lipogenesis and in regulating mitochondrial fatty acid oxidation. Plays an important role in body energy homeostasis. Contributes to the biosynthesis of membrane phospholipids, cholesterol esters and triglycerides. The chain is Acyl-CoA desaturase (SCD) from Ovis aries (Sheep).